The sequence spans 330 residues: Olfactory receptor 1P1 (330 aa).

Over 1–39 (MGLTQDFFPPTSELLEGGNQTSTFEFLLWGLSDQPQQQH) the chain is Extracellular. Asparagine 19 is a glycosylation site (N-linked (GlcNAc...) asparagine). Residues 40-60 (IFFLLFLWMYVVTVAGNLLIV) traverse the membrane as a helical segment. Residues 61 to 71 (LAIGTDTHLHT) are Cytoplasmic-facing. Residues 72-92 (PMYFFLASLSCADIFSTSTTV) form a helical membrane-spanning segment. The Extracellular segment spans residues 93 to 111 (PKALVNIQTQSRSISYAGC). An intrachain disulfide couples cysteine 111 to cysteine 192. The helical transmembrane segment at 112–132 (LAQLYFFLTFGDMDIFLPATM) threads the bilayer. At 133 to 137 (AYDRY) the chain is on the cytoplasmic side. Residues 138 to 158 (VAICHLLHYMMIMSLHRCAFL) form a helical membrane-spanning segment. The Extracellular portion of the chain corresponds to 159-209 (VTACWTLTSLLAMTRTFLIFRLSLCSKILPGFFCDLGPLMKVSCSDAQVNE). The helical transmembrane segment at 210–230 (LVLLFLGGAVILIPFMLILVS) threads the bilayer. Residues 231-257 (YIRIVSAILRAPSAQGRRKAFSTCDSH) lie on the Cytoplasmic side of the membrane. The helical transmembrane segment at 258–278 (LVVVALFFGTVIRAYLCPSSS) threads the bilayer. Residues 279–286 (SSNSVKED) lie on the Extracellular side of the membrane. A helical membrane pass occupies residues 287–307 (TAAAVMYTVVTPLLNPFIYSM). Residues 308-330 (RNKDMKAAVVRLLKGRVSFSQGQ) are Cytoplasmic-facing.

Belongs to the G-protein coupled receptor 1 family.

Its subcellular location is the cell membrane. Its function is as follows. Odorant receptor. This chain is Olfactory receptor 1P1 (OR1P1), found in Homo sapiens (Human).